Here is a 434-residue protein sequence, read N- to C-terminus: MSKILKIIGREIIDSRGNPTIECEVLLEGGFVGLASVPSGASTGSFETWELRDQDKNRFMGKGVQKAVEIINNKIFYSLKNKNAIDQFDIDQTMINLDGTENKSNLGSNSILSVSLATAKAAASSKGMPLYQHIAEINNTPGVFSMPLPMINIINGGKHANNNIDIQEFMIQPISAKSITEAIRIGAEIFHSLGNLLKDKGMSTTVGDEGGYAPNFKSNEEALNVIQDAVHKTKYKLGKDITLAIDCAASELYNKTRKKYQFIGEGTEFSSQELTHYLKKLSNKYPIISIEDGQDESDWEGFLYQTKELGNSLQLVGDDLFVTNKNILKKGIKKGVANAILIKLNQIGTLTETIETIKIAKKFNYGVIISHRSGETEDTSIADLSVGTASGQIKTGSMSRSDRTSKYNQLIRIEEILNKKRAPFYGLKEVKSSF.

Glutamine 167 is a binding site for (2R)-2-phosphoglycerate. Glutamate 209 (proton donor) is an active-site residue. Mg(2+) is bound by residues aspartate 246, glutamate 291, and aspartate 318. The (2R)-2-phosphoglycerate site is built by lysine 343, arginine 372, serine 373, and lysine 394. The active-site Proton acceptor is lysine 343.

This sequence belongs to the enolase family. As to quaternary structure, component of the RNA degradosome, a multiprotein complex involved in RNA processing and mRNA degradation. Mg(2+) is required as a cofactor.

It is found in the cytoplasm. It localises to the secreted. The protein localises to the cell surface. It carries out the reaction (2R)-2-phosphoglycerate = phosphoenolpyruvate + H2O. It functions in the pathway carbohydrate degradation; glycolysis; pyruvate from D-glyceraldehyde 3-phosphate: step 4/5. In terms of biological role, catalyzes the reversible conversion of 2-phosphoglycerate (2-PG) into phosphoenolpyruvate (PEP). It is essential for the degradation of carbohydrates via glycolysis. In Buchnera aphidicola subsp. Schizaphis graminum (strain Sg), this protein is Enolase.